Consider the following 194-residue polypeptide: Chromophore lyase CpcT/CpeT 1 (194 aa).

The protein belongs to the CpcT/CpeT biliprotein lyase family.

In terms of biological role, covalently attaches a chromophore to Cys residue(s) of phycobiliproteins. In Microcystis aeruginosa (strain NIES-843 / IAM M-2473), this protein is Chromophore lyase CpcT/CpeT 1.